Consider the following 131-residue polypeptide: Large ribosomal subunit protein eL32 (131 aa).

It belongs to the eukaryotic ribosomal protein eL32 family.

This is Large ribosomal subunit protein eL32 (rpl32e) from Sulfurisphaera tokodaii (strain DSM 16993 / JCM 10545 / NBRC 100140 / 7) (Sulfolobus tokodaii).